We begin with the raw amino-acid sequence, 417 residues long: Exodeoxyribonuclease 7 large subunit (417 aa).

This sequence belongs to the XseA family. In terms of assembly, heterooligomer composed of large and small subunits.

Its subcellular location is the cytoplasm. It carries out the reaction Exonucleolytic cleavage in either 5'- to 3'- or 3'- to 5'-direction to yield nucleoside 5'-phosphates.. Its function is as follows. Bidirectionally degrades single-stranded DNA into large acid-insoluble oligonucleotides, which are then degraded further into small acid-soluble oligonucleotides. The polypeptide is Exodeoxyribonuclease 7 large subunit (Corynebacterium glutamicum (strain ATCC 13032 / DSM 20300 / JCM 1318 / BCRC 11384 / CCUG 27702 / LMG 3730 / NBRC 12168 / NCIMB 10025 / NRRL B-2784 / 534)).